The chain runs to 271 residues: 5-deoxy-glucuronate isomerase (271 aa).

Belongs to the isomerase IolB family.

The enzyme catalyses 5-deoxy-D-glucuronate = 5-dehydro-2-deoxy-D-gluconate. The protein operates within polyol metabolism; myo-inositol degradation into acetyl-CoA; acetyl-CoA from myo-inositol: step 4/7. Involved in the isomerization of 5-deoxy-glucuronate (5DG) to 5-dehydro-2-deoxy-D-gluconate (DKG or 2-deoxy-5-keto-D-gluconate). The polypeptide is 5-deoxy-glucuronate isomerase (Bacillus licheniformis (strain ATCC 14580 / DSM 13 / JCM 2505 / CCUG 7422 / NBRC 12200 / NCIMB 9375 / NCTC 10341 / NRRL NRS-1264 / Gibson 46)).